We begin with the raw amino-acid sequence, 565 residues long: Sulfite reductase [NADPH] hemoprotein beta-component (565 aa).

[4Fe-4S] cluster is bound by residues Cys-429, Cys-435, Cys-474, and Cys-478. Position 478 (Cys-478) interacts with siroheme.

The protein belongs to the nitrite and sulfite reductase 4Fe-4S domain family. As to quaternary structure, alpha(8)-beta(8). The alpha component is a flavoprotein, the beta component is a hemoprotein. The cofactor is siroheme. It depends on [4Fe-4S] cluster as a cofactor.

The catalysed reaction is hydrogen sulfide + 3 NADP(+) + 3 H2O = sulfite + 3 NADPH + 4 H(+). It participates in sulfur metabolism; hydrogen sulfide biosynthesis; hydrogen sulfide from sulfite (NADPH route): step 1/1. Functionally, component of the sulfite reductase complex that catalyzes the 6-electron reduction of sulfite to sulfide. This is one of several activities required for the biosynthesis of L-cysteine from sulfate. The sequence is that of Sulfite reductase [NADPH] hemoprotein beta-component from Shewanella piezotolerans (strain WP3 / JCM 13877).